Here is a 111-residue protein sequence, read N- to C-terminus: MPKIFFLPHKLLLPKGGCFECKEGETILNVALKNNIKLEHACEKSCACSTCHCIIRKGFLSLSGWSEKEEDVLDKAWGLESTSRLSCQAIIGNIDIEVQIPLYNTNYIIEN.

The 2Fe-2S ferredoxin-type domain maps to Met-1–Asn-104. [2Fe-2S] cluster is bound by residues Cys-42, Cys-48, Cys-51, and Cys-87.

It belongs to the adrenodoxin/putidaredoxin family. It depends on [2Fe-2S] cluster as a cofactor.

In terms of biological role, ferredoxin are iron-sulfur proteins that transfer electrons in a wide variety of metabolic reactions. This chain is 2Fe-2S ferredoxin (fdx), found in Buchnera aphidicola subsp. Schizaphis graminum (strain Sg).